A 110-amino-acid chain; its full sequence is Inner kinetochore subunit mhf1 (110 aa).

The protein belongs to the TAF9 family. CENP-S/MHF1 subfamily. The MHF histone-fold complex is a heterotetramer of 2 mhf1-mhf2 heterodimers. Component of the inner kinetochore constitutive centromere-associated network (CCAN) (also known as central kinetochore Sim4 complex in fission yeast), which is composed of at least cnl2, cnp3, cnp20, fta1, fta2, fta3, fta4, fta6, fta7, mal2, mhf1, mhf2, mis6, mis15, mis17, sim4 and wip1.

The protein localises to the nucleus. Component of a FANCM-MHF complex that promotes gene conversion at blocked replication forks, probably by reversal of the stalled fork. FANCM-MHF promotes non-crossover recombination. The protein is Inner kinetochore subunit mhf1 of Schizosaccharomyces pombe (strain 972 / ATCC 24843) (Fission yeast).